The chain runs to 338 residues: tRNA N6-adenosine threonylcarbamoyltransferase (338 aa).

Residues H110 and H114 each coordinate Fe cation. Substrate-binding positions include V132–G136, D165, G178, and N274. Position 298 (D298) interacts with Fe cation.

The protein belongs to the KAE1 / TsaD family. Fe(2+) is required as a cofactor.

The protein localises to the cytoplasm. The catalysed reaction is L-threonylcarbamoyladenylate + adenosine(37) in tRNA = N(6)-L-threonylcarbamoyladenosine(37) in tRNA + AMP + H(+). In terms of biological role, required for the formation of a threonylcarbamoyl group on adenosine at position 37 (t(6)A37) in tRNAs that read codons beginning with adenine. Is involved in the transfer of the threonylcarbamoyl moiety of threonylcarbamoyl-AMP (TC-AMP) to the N6 group of A37, together with TsaE and TsaB. TsaD likely plays a direct catalytic role in this reaction. The sequence is that of tRNA N6-adenosine threonylcarbamoyltransferase from Borrelia duttonii (strain Ly).